We begin with the raw amino-acid sequence, 207 residues long: LexA repressor (207 aa).

The segment at residues 28-48 (VREIGEAVGLASSSTVHGHLS) is a DNA-binding region (H-T-H motif). Active-site for autocatalytic cleavage activity residues include S130 and K168.

This sequence belongs to the peptidase S24 family. Homodimer.

It carries out the reaction Hydrolysis of Ala-|-Gly bond in repressor LexA.. Functionally, represses a number of genes involved in the response to DNA damage (SOS response), including recA and lexA. In the presence of single-stranded DNA, RecA interacts with LexA causing an autocatalytic cleavage which disrupts the DNA-binding part of LexA, leading to derepression of the SOS regulon and eventually DNA repair. This chain is LexA repressor, found in Staphylococcus carnosus (strain TM300).